The following is a 1226-amino-acid chain: Methionine synthase (1226 aa).

Residues 6-326 (RAQIEAQLKQ…EHIRHMAMAV (321 aa)) enclose the Hcy-binding domain. Cys-248, Cys-311, and Cys-312 together coordinate Zn(2+). Residues 357–618 (FVNVGERTNV…VPEKLREAVE (262 aa)) enclose the Pterin-binding domain. Positions 651-745 (SALEWRTWSV…FINASKQVGS (95 aa)) constitute a B12-binding N-terminal domain. Methylcob(III)alamin contacts are provided by residues Glu-695, 757 to 761 (GDVHD), His-760, Ser-805, Thr-809, and Ala-861. A B12-binding domain is found at 747-882 (NGKILLATVK…SDELRPAFVE (136 aa)). The region spanning 898 to 1226 (KKPRTKPVTL…EKWLGPNING (329 aa)) is the AdoMet activation domain. S-adenosyl-L-methionine contacts are provided by residues Asp-948, Arg-1136, and 1191 to 1192 (YF).

The protein belongs to the vitamin-B12 dependent methionine synthase family. It depends on methylcob(III)alamin as a cofactor. Zn(2+) serves as cofactor.

It carries out the reaction (6S)-5-methyl-5,6,7,8-tetrahydrofolate + L-homocysteine = (6S)-5,6,7,8-tetrahydrofolate + L-methionine. It participates in amino-acid biosynthesis; L-methionine biosynthesis via de novo pathway; L-methionine from L-homocysteine (MetH route): step 1/1. Functionally, catalyzes the transfer of a methyl group from methyl-cobalamin to homocysteine, yielding enzyme-bound cob(I)alamin and methionine. Subsequently, remethylates the cofactor using methyltetrahydrofolate. The polypeptide is Methionine synthase (metH) (Vibrio vulnificus (strain YJ016)).